A 723-amino-acid chain; its full sequence is Enolase-phosphatase E1 (723 aa).

Residues S126–S127 and K160 contribute to the substrate site. The disordered stretch occupies residues G239–S723. Basic and acidic residues-rich tracts occupy residues V262 to A284 and A293 to V308. Residues A311–D320 are compositionally biased toward low complexity. 6 stretches are compositionally biased toward basic and acidic residues: residues A322–E406, A419–E443, E468–A479, T487–A496, S511–E565, and V577–A593. Composition is skewed to low complexity over residues V596–E606 and N636–V647. The span at G653–D666 shows a compositional bias: basic and acidic residues.

This sequence belongs to the HAD-like hydrolase superfamily. MasA/MtnC family. Monomer.

It is found in the cytoplasm. Its subcellular location is the nucleus. It catalyses the reaction 5-methylsulfanyl-2,3-dioxopentyl phosphate + H2O = 1,2-dihydroxy-5-(methylsulfanyl)pent-1-en-3-one + phosphate. The protein operates within amino-acid biosynthesis; L-methionine biosynthesis via salvage pathway; L-methionine from S-methyl-5-thio-alpha-D-ribose 1-phosphate: step 3/6. It participates in amino-acid biosynthesis; L-methionine biosynthesis via salvage pathway; L-methionine from S-methyl-5-thio-alpha-D-ribose 1-phosphate: step 4/6. Bifunctional enzyme that catalyzes the enolization of 2,3-diketo-5-methylthiopentyl-1-phosphate (DK-MTP-1-P) into the intermediate 2-hydroxy-3-keto-5-methylthiopentenyl-1-phosphate (HK-MTPenyl-1-P), which is then dephosphorylated to form the acireductone 1,2-dihydroxy-3-keto-5-methylthiopentene (DHK-MTPene). The sequence is that of Enolase-phosphatase E1 from Culex quinquefasciatus (Southern house mosquito).